A 118-amino-acid polypeptide reads, in one-letter code: Large ribosomal subunit protein uL24 (118 aa).

Belongs to the universal ribosomal protein uL24 family. In terms of assembly, part of the 50S ribosomal subunit.

In terms of biological role, one of two assembly initiator proteins, it binds directly to the 5'-end of the 23S rRNA, where it nucleates assembly of the 50S subunit. Functionally, one of the proteins that surrounds the polypeptide exit tunnel on the outside of the subunit. In Prochlorococcus marinus subsp. pastoris (strain CCMP1986 / NIES-2087 / MED4), this protein is Large ribosomal subunit protein uL24.